The sequence spans 371 residues: UPF0284 protein tll2306 (371 aa).

Belongs to the UPF0284 family.

The sequence is that of UPF0284 protein tll2306 from Thermosynechococcus vestitus (strain NIES-2133 / IAM M-273 / BP-1).